The primary structure comprises 317 residues: Large ribosomal subunit protein uL10 (317 aa).

At Y24 the chain carries Phosphotyrosine. Phosphothreonine is present on T59. A Glycyl lysine isopeptide (Lys-Gly) (interchain with G-Cter in ubiquitin) cross-link involves residue K264. The interval 294–317 (APAKVEAKEESEESDEDMGFGLFD) is disordered. A Glycyl lysine isopeptide (Lys-Gly) (interchain with G-Cter in SUMO1); alternate cross-link involves residue K297. K297 is covalently cross-linked (Glycyl lysine isopeptide (Lys-Gly) (interchain with G-Cter in SUMO2); alternate). Residues 302–311 (EESEESDEDM) are compositionally biased toward acidic residues. 2 positions are modified to phosphoserine: S304 and S307.

The protein belongs to the universal ribosomal protein uL10 family. As to quaternary structure, P0 forms a pentameric complex by interaction with dimers of P1 and P2. Identified in a IGF2BP1-dependent mRNP granule complex containing untranslated mRNAs. Interacts with APEX1. Interacts with FMR1 isoform 6. In terms of processing, ubiquitinated at Lys-264 by RNF14 and RNF25 in response to ribosome collisions (ribosome stalling).

It is found in the nucleus. Its subcellular location is the cytoplasm. In terms of biological role, ribosomal protein P0 is the functional equivalent of E.coli protein L10. This Homo sapiens (Human) protein is Large ribosomal subunit protein uL10 (RPLP0).